The primary structure comprises 38 residues: Toxin Bot33 (38 aa).

3 cysteine pairs are disulfide-bonded: Cys8–Cys28, Cys14–Cys33, and Cys18–Cys35.

The protein belongs to the short scorpion toxin superfamily. Potassium channel inhibitor family. Expressed by the venom gland.

It is found in the secreted. Its function is as follows. A probable toxin that has no activity on the tested mammalian voltage-gated potassium channels (when tested at 1 uM) and is not toxic to mice. It resembles alpha toxins that block voltage-gated potassium channels. The polypeptide is Toxin Bot33 (Buthus occitanus tunetanus (Common European scorpion)).